The following is a 398-amino-acid chain: Growth-regulating factor 3 (398 aa).

Residues 1 to 17 show a composition bias toward low complexity; that stretch reads MDLQLKQWRSQQQQQHQ. Residues 1–32 form a disordered region; that stretch reads MDLQLKQWRSQQQQQHQTESEEQPSAAKIPKH. Residues 76–111 form the QLQ domain; the sequence is FFSWAQWQELELQALIYRYMLAGAAVPQELLLPIKK. Residues 144 to 188 form the WRC domain; it reads DPEPGRCRRTDGKKWRCSRDVFAGHKYCERHMHRGRNRSRKPVET. Short sequence motifs (bipartite nuclear localization signal) lie at residues 149–159 and 177–184; these read RCRRTDGKKWR and RGRNRSRK. Composition is skewed to polar residues over residues 299 to 350 and 383 to 398; these read SLQE…RDQQ and PTSV…QAFH. A disordered region spans residues 299–398; the sequence is SLQEADNSSS…QLGVSTQAFH (100 aa).

This sequence belongs to the GRF family. In terms of tissue distribution, strongly expressed in actively growing and developing tissues, such as roots, upper stems, and shoot tips containing the shoot apical meristem (SAM) and flower buds. Also expressed in mature flowers, but weakly expressed in mature stems and leaves.

It is found in the nucleus. Its function is as follows. Transcription activator that plays a role in the regulation of cell expansion in leaf and cotyledons tissues. Component of a network formed by miR396, the GRFs and their interacting factors (GIFs) acting in the regulation of meristem function, at least partially through the control of cell proliferation. microRNA396-GRF1/GRF3 regulatory module acts as a developmental regulator in the reprogramming of root cells during cyst nematode infection, leading to the formation of the syncytium. This Arabidopsis thaliana (Mouse-ear cress) protein is Growth-regulating factor 3 (GRF3).